Consider the following 351-residue polypeptide: Phospho-N-acetylmuramoyl-pentapeptide-transferase (351 aa).

10 helical membrane passes run 3–23, 51–71, 76–96, 113–133, 152–172, 181–201, 223–243, 250–270, 275–295, and 329–349; these read GIIA…PPLI, TMGG…AHAV, PTVS…VGFL, GAKM…VTMF, FGPP…IVAT, GLDG…VIIG, PLDL…FLWF, IFMG…LAIT, LLLL…IIQV, and FWII…LEWM.

This sequence belongs to the glycosyltransferase 4 family. MraY subfamily. Mg(2+) serves as cofactor.

Its subcellular location is the cell membrane. It catalyses the reaction UDP-N-acetyl-alpha-D-muramoyl-L-alanyl-gamma-D-glutamyl-meso-2,6-diaminopimeloyl-D-alanyl-D-alanine + di-trans,octa-cis-undecaprenyl phosphate = di-trans,octa-cis-undecaprenyl diphospho-N-acetyl-alpha-D-muramoyl-L-alanyl-D-glutamyl-meso-2,6-diaminopimeloyl-D-alanyl-D-alanine + UMP. It functions in the pathway cell wall biogenesis; peptidoglycan biosynthesis. In terms of biological role, catalyzes the initial step of the lipid cycle reactions in the biosynthesis of the cell wall peptidoglycan: transfers peptidoglycan precursor phospho-MurNAc-pentapeptide from UDP-MurNAc-pentapeptide onto the lipid carrier undecaprenyl phosphate, yielding undecaprenyl-pyrophosphoryl-MurNAc-pentapeptide, known as lipid I. The protein is Phospho-N-acetylmuramoyl-pentapeptide-transferase of Thermobifida fusca (strain YX).